The chain runs to 257 residues: Metallo-beta-lactamase type 2 (257 aa).

The first 30 residues, 1–30 (MKKNTLLKVGLCVSLLGTTQFVSTISSVQA), serve as a signal peptide directing secretion. 5 residues coordinate Zn(2+): His-116, His-118, Asp-120, His-179, and Cys-198. Substrate contacts are provided by Lys-201 and Asn-210. Zn(2+) is bound at residue His-240.

This sequence belongs to the metallo-beta-lactamase superfamily. Class-B beta-lactamase family. In terms of assembly, monomer. Requires Zn(2+) as cofactor.

The protein localises to the periplasm. It carries out the reaction a beta-lactam + H2O = a substituted beta-amino acid. Confers resistance to the different beta-lactams antibiotics (penicillin, cephalosporin and carbapenem) via the hydrolysis of the beta-lactam ring. In Bacillus sp. (strain 170), this protein is Metallo-beta-lactamase type 2.